The sequence spans 90 residues: Probable Fe(2+)-trafficking protein (90 aa).

It belongs to the Fe(2+)-trafficking protein family.

Functionally, could be a mediator in iron transactions between iron acquisition and iron-requiring processes, such as synthesis and/or repair of Fe-S clusters in biosynthetic enzymes. This chain is Probable Fe(2+)-trafficking protein, found in Laribacter hongkongensis (strain HLHK9).